The chain runs to 100 residues: Small ribosomal subunit protein uS14c (100 aa).

The protein belongs to the universal ribosomal protein uS14 family. In terms of assembly, part of the 30S ribosomal subunit.

It is found in the plastid. It localises to the chloroplast. Binds 16S rRNA, required for the assembly of 30S particles. This Pleurastrum terricola (Filamentous green alga) protein is Small ribosomal subunit protein uS14c.